Reading from the N-terminus, the 731-residue chain is 1,4-alpha-glucan branching enzyme GlgB (731 aa).

The active-site Nucleophile is aspartate 411. Glutamate 464 acts as the Proton donor in catalysis.

The protein belongs to the glycosyl hydrolase 13 family. GlgB subfamily. Monomer.

The catalysed reaction is Transfers a segment of a (1-&gt;4)-alpha-D-glucan chain to a primary hydroxy group in a similar glucan chain.. The protein operates within glycan biosynthesis; glycogen biosynthesis. Functionally, catalyzes the formation of the alpha-1,6-glucosidic linkages in glycogen by scission of a 1,4-alpha-linked oligosaccharide from growing alpha-1,4-glucan chains and the subsequent attachment of the oligosaccharide to the alpha-1,6 position. The chain is 1,4-alpha-glucan branching enzyme GlgB from Mycobacterium ulcerans (strain Agy99).